The following is a 333-amino-acid chain: Adenosine deaminase (333 aa).

Positions 12 and 14 each coordinate Zn(2+). 3 residues coordinate substrate: His-14, Asp-16, and Gly-170. His-197 contributes to the Zn(2+) binding site. Glu-200 functions as the Proton donor in the catalytic mechanism. Asp-278 contributes to the Zn(2+) binding site. Residue Asp-279 coordinates substrate.

This sequence belongs to the metallo-dependent hydrolases superfamily. Adenosine and AMP deaminases family. Adenosine deaminase subfamily. Zn(2+) serves as cofactor.

It carries out the reaction adenosine + H2O + H(+) = inosine + NH4(+). The catalysed reaction is 2'-deoxyadenosine + H2O + H(+) = 2'-deoxyinosine + NH4(+). Functionally, catalyzes the hydrolytic deamination of adenosine and 2-deoxyadenosine. The polypeptide is Adenosine deaminase (Edwardsiella ictaluri (strain 93-146)).